Reading from the N-terminus, the 383-residue chain is Photosynthetic reaction center cytochrome c subunit (383 aa).

Positions 1–22 (MNLGKQLTLPAVAVVASVVLLG) are cleaved as a signal peptide. The N-palmitoyl cysteine moiety is linked to residue Cys-23. Residue Cys-23 is the site of S-diacylglycerol cysteine attachment. Heme is bound by residues Met-94, Cys-107, Cys-110, His-111, Met-130, His-144, Cys-152, Cys-155, His-156, Met-236, Cys-247, Cys-250, His-251, Cys-307, Cys-310, and His-311. Residues 335–383 (PAEAAPATEEAPAAEAEAVEAAPVEEAAPAPVEQAAAPVEDAAPAPQQL) form a disordered region.

As to quaternary structure, component of the photosynthetic reaction center composed of protein subunits L (PufL), M (PufM), H (PuhA) and cytochrome C (PufC). The reaction center interacts with light-harvesting antenna complex LH1. Post-translationally, binds 4 heme groups per subunit.

It localises to the cellular chromatophore membrane. In terms of biological role, the reaction center of purple bacteria contains a tightly bound cytochrome molecule which re-reduces the photo oxidized primary electron donor. The sequence is that of Photosynthetic reaction center cytochrome c subunit (pufC) from Allochromatium vinosum (strain ATCC 17899 / DSM 180 / NBRC 103801 / NCIMB 10441 / D) (Chromatium vinosum).